The sequence spans 440 residues: Proline--tRNA ligase (440 aa).

Belongs to the class-II aminoacyl-tRNA synthetase family. ProS type 2 subfamily. As to quaternary structure, homodimer.

The protein localises to the cytoplasm. The enzyme catalyses tRNA(Pro) + L-proline + ATP = L-prolyl-tRNA(Pro) + AMP + diphosphate. Catalyzes the attachment of proline to tRNA(Pro) in a two-step reaction: proline is first activated by ATP to form Pro-AMP and then transferred to the acceptor end of tRNA(Pro). The chain is Proline--tRNA ligase from Rhizobium leguminosarum bv. trifolii (strain WSM2304).